The sequence spans 803 residues: Leucine--tRNA ligase (803 aa).

A 'HIGH' region motif is present at residues 40 to 51 (PYPSGQGLHVGH). The 'KMSKS' region motif lies at 575–579 (KMSKS). Lys-578 contributes to the ATP binding site.

It belongs to the class-I aminoacyl-tRNA synthetase family.

Its subcellular location is the cytoplasm. The catalysed reaction is tRNA(Leu) + L-leucine + ATP = L-leucyl-tRNA(Leu) + AMP + diphosphate. The polypeptide is Leucine--tRNA ligase (Lacticaseibacillus paracasei (strain ATCC 334 / BCRC 17002 / CCUG 31169 / CIP 107868 / KCTC 3260 / NRRL B-441) (Lactobacillus paracasei)).